A 305-amino-acid polypeptide reads, in one-letter code: Protoheme IX farnesyltransferase (305 aa).

A run of 9 helical transmembrane segments spans residues 31–51 (VISL…YSVH), 52–72 (PFIA…AGAI), 96–118 (VIES…FFMA), 123–145 (LLAS…IWLK), 151–171 (NIVI…AAVS), 179–199 (IILF…LALF), 225–245 (ILIY…IGMN), 247–267 (FIYL…AGSL), and 281–301 (FAYS…TNTI).

It belongs to the UbiA prenyltransferase family. Protoheme IX farnesyltransferase subfamily.

The protein localises to the cell inner membrane. It catalyses the reaction heme b + (2E,6E)-farnesyl diphosphate + H2O = Fe(II)-heme o + diphosphate. It participates in porphyrin-containing compound metabolism; heme O biosynthesis; heme O from protoheme: step 1/1. Its function is as follows. Converts heme B (protoheme IX) to heme O by substitution of the vinyl group on carbon 2 of heme B porphyrin ring with a hydroxyethyl farnesyl side group. This is Protoheme IX farnesyltransferase from Rickettsia massiliae (strain Mtu5).